A 137-amino-acid polypeptide reads, in one-letter code: Proline-rich protein 13 (137 aa).

2 disordered regions span residues 26–54 and 94–137; these read PPPL…PCRP and VGPG…SDSD. Residues 103–124 are compositionally biased toward basic residues; the sequence is KTRKKMKKAHKKSHKHHKHGKH. The segment covering 125 to 137 has biased composition (low complexity); that stretch reads SSSSSSSSSSDSD.

Its subcellular location is the nucleus. Negatively regulates TSP1 expression at the level of transcription. This down-regulation was shown to reduce taxane-induced apoptosis. In Mus musculus (Mouse), this protein is Proline-rich protein 13 (Prr13).